The sequence spans 385 residues: S-adenosylmethionine synthase (385 aa).

Histidine 16 contacts ATP. Mg(2+) is bound at residue aspartate 18. Glutamate 44 serves as a coordination point for K(+). The L-methionine site is built by glutamate 57 and glutamine 100. The interval 100–110 (QSPDINQGVDR) is flexible loop. ATP is bound by residues 164–166 (DGK), 230–231 (KF), aspartate 239, 245–246 (RK), alanine 262, and lysine 266. Aspartate 239 serves as a coordination point for L-methionine. Lysine 270 is a binding site for L-methionine.

Belongs to the AdoMet synthase family. In terms of assembly, homotetramer; dimer of dimers. The cofactor is Mg(2+). Requires K(+) as cofactor.

The protein resides in the cytoplasm. The enzyme catalyses L-methionine + ATP + H2O = S-adenosyl-L-methionine + phosphate + diphosphate. It participates in amino-acid biosynthesis; S-adenosyl-L-methionine biosynthesis; S-adenosyl-L-methionine from L-methionine: step 1/1. In terms of biological role, catalyzes the formation of S-adenosylmethionine (AdoMet) from methionine and ATP. The overall synthetic reaction is composed of two sequential steps, AdoMet formation and the subsequent tripolyphosphate hydrolysis which occurs prior to release of AdoMet from the enzyme. The chain is S-adenosylmethionine synthase from Helicobacter pylori (strain J99 / ATCC 700824) (Campylobacter pylori J99).